A 663-amino-acid polypeptide reads, in one-letter code: DNA topoisomerase 4 subunit B (663 aa).

ATP is bound by residues Y7, N47, D74, 114 to 120, and K341; that span reads GLHGVGA. The segment at 386–416 is disordered; the sequence is REAARKAREDARSGKKNKRKDTLLSGKLTPA. Residues 387 to 398 show a composition bias toward basic and acidic residues; the sequence is EAARKAREDARS. The Toprim domain occupies 424–538; sequence NELYLVEGDS…AGRVFIALPP (115 aa). 3 residues coordinate Mg(2+): E430, D503, and D505.

Belongs to the type II topoisomerase family. ParE type 2 subfamily. As to quaternary structure, heterotetramer composed of ParC and ParE. Mg(2+) is required as a cofactor. Requires Mn(2+) as cofactor. It depends on Ca(2+) as a cofactor.

It carries out the reaction ATP-dependent breakage, passage and rejoining of double-stranded DNA.. Functionally, topoisomerase IV is essential for chromosome segregation. It relaxes supercoiled DNA. Performs the decatenation events required during the replication of a circular DNA molecule. This is DNA topoisomerase 4 subunit B from Staphylococcus aureus (strain NCTC 8325 / PS 47).